Reading from the N-terminus, the 314-residue chain is Probable cell division protein WhiA (314 aa).

The H-T-H motif DNA-binding region spans 274 to 308; it reads SLKELGEMVSTGPISKSGMNHRLRKLNELADKIRN.

It belongs to the WhiA family.

Its function is as follows. Involved in cell division and chromosome segregation. The protein is Probable cell division protein WhiA of Staphylococcus epidermidis (strain ATCC 35984 / DSM 28319 / BCRC 17069 / CCUG 31568 / BM 3577 / RP62A).